A 66-amino-acid chain; its full sequence is MVSKFKILVPQPRSRFLLVRCPVCGNEQVIFSHATFPARCLVCGAQLVEPTGGKAKILGQVVRVLG.

4 residues coordinate Zn(2+): Cys-21, Cys-24, Cys-40, and Cys-43. The segment at 21–43 (CPVCGNEQVIFSHATFPARCLVC) adopts a C4-type zinc-finger fold.

It belongs to the eukaryotic ribosomal protein eS27 family. Part of the 30S ribosomal subunit. Zn(2+) serves as cofactor.

The sequence is that of Small ribosomal subunit protein eS27 from Hyperthermus butylicus (strain DSM 5456 / JCM 9403 / PLM1-5).